Reading from the N-terminus, the 266-residue chain is 5'-nucleotidase SurE (266 aa).

A divalent metal cation is bound by residues Asp-8, Asp-9, Ser-39, and Asn-93.

The protein belongs to the SurE nucleotidase family. Requires a divalent metal cation as cofactor.

The protein localises to the cytoplasm. It catalyses the reaction a ribonucleoside 5'-phosphate + H2O = a ribonucleoside + phosphate. Functionally, nucleotidase that shows phosphatase activity on nucleoside 5'-monophosphates. In Pyrobaculum arsenaticum (strain DSM 13514 / JCM 11321 / PZ6), this protein is 5'-nucleotidase SurE.